The sequence spans 557 residues: MNIVGQIKEKMKEEIRQAAVRAGLASADELPDVLLEVPRDKAHGDYSTNIAMQLARIAKKPPRAIAEAIVGQLDRERMSVARIEIAGPGFINFYMDNRYLTAVVPAILQAGQAYGESNVGNGEKVQVEFVSANPTGDLHLGHARGAAVGDSLCNILAKAGFDVTREYYINDAGKQIYNLAKSVEARYFQALGVDMPLPEDGYYGDDIVEIGKKLAEEYGDRFVEMEEEERLAFFRDYGLRYELEKIKKDLADFRVPFDVWYSETSLYESGKIDEALSTLRERGYIYEQDGATWFRSTAFGDDKDRVLIKQDGTYTYLLPDIAYHQDKLRRGFKKLINIWGADHHGYIPRMKAAIAALGYDPEALEVEIIQMVNLYQNGERVKMSKRTGKAVTMRELMEEVGVDAVRYFFAMRSGDTHLDFDMDLAVSQSNENPVYYVQYAHARVSSILRQAEEQHISYDGDLALHHLVETEKEIELLKVLGDFPDVVAEAALKRMPHRVTAYAFDLASALHSFYNAEKVLDLDNIEKTKARLALVKAVQITLQNALALIGVSAPEQM.

A 'HIGH' region motif is present at residues 132–142; the sequence is ANPTGDLHLGH.

This sequence belongs to the class-I aminoacyl-tRNA synthetase family. Monomer.

The protein localises to the cytoplasm. It catalyses the reaction tRNA(Arg) + L-arginine + ATP = L-arginyl-tRNA(Arg) + AMP + diphosphate. This is Arginine--tRNA ligase from Geobacillus kaustophilus (strain HTA426).